The primary structure comprises 961 residues: MAPKLFTFVSALSGLASLASAFHAEAKSNIAVYYGQGVNQPRLAEFCAETSYDIINIGFINSFPEQNPLTGLPGSDFGNQCWADTFVVDGIASQLYSHCPNIAEDIPKCQAAGKKVFLSLGGATPTYWFDTIDASTKLADFLWGAFGPVTDAWTVADKPRPFGNAVVDGFDFDIEFFGSKGYANMIKRFRRRFGEVPDQTFYISAAPQCSIPDEQLSVAIKNAVIDFVWVQFYNTPGCSARDFVLGTKNGFNYDSWVEVIKAGANPNAKLYVGLPASGAAANLGYYLTPEEVKPLVKKYMDKYPETFGGVMLWEATQARNNQIDGVGYNEKIREILYDLDPNHPPPTTSPTPTPTPSTTTTSTTSTTSTTSATSTTSTTSTTSTTSTTPTTSTTSTTSTTTPTPSPSPSTASSSTTETVTPSPKPSPSESSTTSETSSLPSTSTPVVSETPSETKTPTSSSAPPLSSSSPVGGSSSTASSSTSTPSETPSASSTRAVSETSTHISTSTSSGPETSLTGSSTSVPATSSSVPSSAISPSSTPVISETPRPPVTSSSSSTFVSSTSTSTDCSESSTAIGTHSSSSISETPSASTPAASPSTSPETTKTLTVFPTPGSSVSTGTTSASTLSSSVPATSGGHTETSTVSTSSANQTPSASTSKPLIPTNSASSTSTGSVTSTPSAPGVPSSSAGSDETATTSTTDSEPTSTSSGSVTAKPTTTEPATTTTIIVTSYTSICPTGFTTITTTITSTYCPGTASATATAIAPTTDVPGSGSGSSPAQPTITADIPEGWTTTVTVCTVCAATPTTVTLTLPPATTTEESTSAQPTGEVPSSDGSGSGEVSTTTVVVVPAPTGNAGDGVPAPGANVGEEYTAAPGSATTSKPLIGGGASGAHTAYPYASSTFHIIPSASAHVPVPSGSGSSPSGTQGGASPTFTGAGSRYDVVKGVPALVALALSLLAVL.

The signal sequence occupies residues 1 to 21 (MAPKLFTFVSALSGLASLASA). Positions 28–339 (SNIAVYYGQG…EKIREILYDL (312 aa)) constitute a GH18 domain. Residue Glu-175 is the Proton donor of the active site. Disordered regions lie at residues 338–720 (DLDP…TTTE), 767–787 (TDVPGSGSGSSPAQPTITADI), 813–842 (PPATTTEESTSAQPTGEVPSSDGSGSGEVS), and 912–933 (HVPVPSGSGSSPSGTQGGASPT). Residues 342–355 (NHPPPTTSPTPTPT) show a composition bias toward pro residues. 4 stretches are compositionally biased toward low complexity: residues 356-510 (PSTT…STSS), 519-544 (SSTSVPATSSSVPSSAISPSSTPVIS), 552-604 (TSSS…PETT), and 612-635 (TPGSSVSTGTTSASTLSSSVPATS). Residues 636–665 (GGHTETSTVSTSSANQTPSASTSKPLIPTN) show a composition bias toward polar residues. Positions 666 to 720 (SASSTSTGSVTSTPSAPGVPSSSAGSDETATTSTTDSEPTSTSSGSVTAKPTTTE) are enriched in low complexity. A lipid anchor (GPI-anchor amidated glycine) is attached at Gly-936. The propeptide at 937 to 961 (AGSRYDVVKGVPALVALALSLLAVL) is removed in mature form.

This sequence belongs to the glycosyl hydrolase 18 family. Chitinase class III subfamily. In terms of processing, O-glycosylated but not N-glycosylated.

The protein localises to the cell membrane. It is found in the secreted. The protein resides in the cell wall. Its subcellular location is the cell tip. The catalysed reaction is Random endo-hydrolysis of N-acetyl-beta-D-glucosaminide (1-&gt;4)-beta-linkages in chitin and chitodextrins.. Its function is as follows. GPI-anchored chitinase involved in the degradation of chitin, a component of the cell walls of fungi and exoskeletal elements of some animals (including worms and arthropods). Required to reshape the cell wall at the sites where cell wall remodeling and/or cell wall maturation actively take place such as sites of conidia formation. In Emericella nidulans (Aspergillus nidulans), this protein is Endochitinase A (chiA).